We begin with the raw amino-acid sequence, 1435 residues long: Gag-Pol polyprotein (1435 aa).

The N-myristoyl glycine; by host moiety is linked to residue Gly2. Residues 7 to 31 are interaction with Gp41; the sequence is VLTGSKLDAWEQIRLKPGSKKKYRL. The segment at 8-43 is interaction with host CALM1; sequence LTGSKLDAWEQIRLKPGSKKKYRLKHLVWASRELER. The interval 12–19 is interaction with host AP3D1; the sequence is KLDAWEQI. Residues 14 to 33 form an interaction with membrane phosphatidylinositol 4,5-bisphosphate and RNA region; the sequence is DAWEQIRLKPGSKKKYRLKH. Residues 16 to 22 carry the Nuclear export signal motif; sequence WEQIRLK. The short motif at 26 to 32 is the Nuclear localization signal element; sequence KKKYRLK. Residues 73–77 form an interaction with membrane phosphatidylinositol 4,5-bisphosphate region; it reads DSLQS. At Tyr130 the chain carries Phosphotyrosine; by host. Residues 187–225 form an interaction with human PPIA/CYPA and NUP153 region; the sequence is NAIGGHQGALQVLKEVINEEAVEWDRTHPPPVGPLPPGQ. Positions 212-232 are disordered; that stretch reads RTHPPPVGPLPPGQIREPTGS. The interval 276-362 is dimerization/Multimerization of capsid protein p24; the sequence is YSPVSILDIK…GGPTHKARVL (87 aa). CCHC-type zinc fingers lie at residues 394 to 411 and 415 to 432; these read IKCF…NCRA and KGCW…DCRN. Residues 455–480 form a disordered region; sequence TSTPISPTDGGGSEGTGESGTERGPE. A compositionally biased stretch (gly residues) spans 463 to 472; that stretch reads DGGGSEGTGE. The segment at 488–492 is dimerization of protease; that stretch reads PQIPL. One can recognise a Peptidase A2 domain in the interval 507-576; the sequence is CEVLLDTGAD…TPVNIIGRNI (70 aa). Asp512 (for protease activity; shared with dimeric partner) is an active-site residue. Dimerization of protease regions lie at residues 536 to 542 and 575 to 587; these read GIGGFIK and NILT…LNFP. Residues 630 to 820 enclose the Reverse transcriptase domain; it reads EGKISRIGPE…PPFLWMGYEL (191 aa). The Mg(2+) site is built by Asp696, Asp771, and Asp772. Positions 813–821 are RT 'primer grip'; it reads FLWMGYELH. The Tryptophan repeat motif motif lies at 984 to 1000; the sequence is WETWWADYWQATWIPEW. One can recognise an RNase H type-1 domain in the interval 1020–1143; the sequence is IMGAETYYVD…IDKLVSKDIR (124 aa). Residues Asp1029, Glu1064, Asp1084, and Asp1135 each coordinate Mg(2+). The segment at 1149–1190 adopts an Integrase-type zinc-finger fold; it reads EGIDQAQEDHEKYHSNWKALASEFGLPPVVAKEIIASCPKCH. Zn(2+)-binding residues include His1158, His1162, Cys1186, and Cys1189. The region spanning 1200–1350 is the Integrase catalytic domain; the sequence is VDCSPEVWQI…TAGERIIDIL (151 aa). Residues Asp1210, Asp1262, and Glu1298 each coordinate Mg(2+). Positions 1369–1416 form a DNA-binding region, integrase-type; it reads FRVYYRDSRDPIWKGPAQLLWKGEGAVVIQDKGDIKVVPRRKAKIIRE.

In terms of assembly, homotrimer; further assembles as hexamers of trimers. Interacts with gp41 (via C-terminus). Interacts with host CALM1; this interaction induces a conformational change in the Matrix protein, triggering exposure of the myristate group. Interacts with host AP3D1; this interaction allows the polyprotein trafficking to multivesicular bodies during virus assembly. Part of the pre-integration complex (PIC) which is composed of viral genome, matrix protein, Vpr and integrase. As to quaternary structure, homodimer; the homodimer further multimerizes as homohexamers or homopentamers. Interacts with human PPIA/CYPA; This interaction stabilizes the capsid. Interacts with human NUP153. Interacts with host PDZD8; this interaction stabilizes the capsid. Interacts with monkey TRIM5; this interaction destabilizes the capsid. Homodimer, whose active site consists of two apposed aspartic acid residues. In terms of assembly, heterodimer of p66 RT and p51 RT (RT p66/p51). Heterodimerization of RT is essential for DNA polymerase activity. The overall folding of the subdomains is similar in p66 RT and p51 RT but the spatial arrangements of the subdomains are dramatically different. As to quaternary structure, homotetramer; may further associate as a homohexadecamer. Part of the pre-integration complex (PIC) which is composed of viral genome, matrix protein, Vpr and integrase. Interacts with human SMARCB1/INI1 and human PSIP1/LEDGF isoform 1. Interacts with human KPNA3; this interaction might play a role in nuclear import of the pre-integration complex. Interacts with human NUP153; this interaction might play a role in nuclear import of the pre-integration complex. Requires Mg(2+) as cofactor. Specific enzymatic cleavages by the viral protease yield mature proteins. The protease is released by autocatalytic cleavage. The polyprotein is cleaved during and after budding, this process is termed maturation. Proteolytic cleavage of p66 RT removes the RNase H domain to yield the p51 RT subunit. Nucleocapsid protein p7 might be further cleaved after virus entry. In terms of processing, tyrosine phosphorylated presumably in the virion by a host kinase. Phosphorylation is apparently not a major regulator of membrane association. Post-translationally, phosphorylated possibly by host MAPK1; this phosphorylation is necessary for Pin1-mediated virion uncoating. Methylated by host PRMT6, impairing its function by reducing RNA annealing and the initiation of reverse transcription.

The protein localises to the host cell membrane. Its subcellular location is the host endosome. It is found in the host multivesicular body. It localises to the virion membrane. The protein resides in the host nucleus. The protein localises to the host cytoplasm. Its subcellular location is the virion. The enzyme catalyses Specific for a P1 residue that is hydrophobic, and P1' variable, but often Pro.. The catalysed reaction is Endohydrolysis of RNA in RNA/DNA hybrids. Three different cleavage modes: 1. sequence-specific internal cleavage of RNA. Human immunodeficiency virus type 1 and Moloney murine leukemia virus enzymes prefer to cleave the RNA strand one nucleotide away from the RNA-DNA junction. 2. RNA 5'-end directed cleavage 13-19 nucleotides from the RNA end. 3. DNA 3'-end directed cleavage 15-20 nucleotides away from the primer terminus.. It carries out the reaction 3'-end directed exonucleolytic cleavage of viral RNA-DNA hybrid.. It catalyses the reaction DNA(n) + a 2'-deoxyribonucleoside 5'-triphosphate = DNA(n+1) + diphosphate. Protease: The viral protease is inhibited by many synthetic protease inhibitors (PIs), such as amprenavir, atazanavir, indinavir, loprinavir, nelfinavir, ritonavir and saquinavir. Use of protease inhibitors in tritherapy regimens permit more ambitious therapeutic strategies. Reverse transcriptase/ribonuclease H: RT can be inhibited either by nucleoside RT inhibitors (NRTIs) or by non nucleoside RT inhibitors (NNRTIs). NRTIs act as chain terminators, whereas NNRTIs inhibit DNA polymerization by binding a small hydrophobic pocket near the RT active site and inducing an allosteric change in this region. Classical NRTIs are abacavir, adefovir (PMEA), didanosine (ddI), lamivudine (3TC), stavudine (d4T), tenofovir (PMPA), zalcitabine (ddC), and zidovudine (AZT). Classical NNRTIs are atevirdine (BHAP U-87201E), delavirdine, efavirenz (DMP-266), emivirine (I-EBU), and nevirapine (BI-RG-587). The tritherapies used as a basic effective treatment of AIDS associate two NRTIs and one NNRTI. Mediates, with Gag polyprotein, the essential events in virion assembly, including binding the plasma membrane, making the protein-protein interactions necessary to create spherical particles, recruiting the viral Env proteins, and packaging the genomic RNA via direct interactions with the RNA packaging sequence (Psi). Gag-Pol polyprotein may regulate its own translation, by the binding genomic RNA in the 5'-UTR. At low concentration, the polyprotein would promote translation, whereas at high concentration, the polyprotein would encapsidate genomic RNA and then shut off translation. In terms of biological role, targets the polyprotein to the plasma membrane via a multipartite membrane-binding signal, that includes its myristoylated N-terminus. Matrix protein is part of the pre-integration complex. Implicated in the release from host cell mediated by Vpu. Binds to RNA. Functionally, forms the conical core that encapsulates the genomic RNA-nucleocapsid complex in the virion. Most core are conical, with only 7% tubular. The core is constituted by capsid protein hexamer subunits. The core is disassembled soon after virion entry. Host restriction factors such as TRIM5-alpha or TRIMCyp bind retroviral capsids and cause premature capsid disassembly, leading to blocks in reverse transcription. Capsid restriction by TRIM5 is one of the factors which restricts HIV-1 to the human species. Host PIN1 apparently facilitates the virion uncoating. On the other hand, interactions with PDZD8 or CYPA stabilize the capsid. Its function is as follows. Encapsulates and protects viral dimeric unspliced genomic RNA (gRNA). Binds these RNAs through its zinc fingers. Acts as a nucleic acid chaperone which is involved in rearangement of nucleic acid secondary structure during gRNA retrotranscription. Also facilitates template switch leading to recombination. As part of the polyprotein, participates in gRNA dimerization, packaging, tRNA incorporation and virion assembly. Aspartyl protease that mediates proteolytic cleavages of Gag and Gag-Pol polyproteins during or shortly after the release of the virion from the plasma membrane. Cleavages take place as an ordered, step-wise cascade to yield mature proteins. This process is called maturation. Displays maximal activity during the budding process just prior to particle release from the cell. Also cleaves Nef and Vif, probably concomitantly with viral structural proteins on maturation of virus particles. Hydrolyzes host EIF4GI and PABP1 in order to shut off the capped cellular mRNA translation. The resulting inhibition of cellular protein synthesis serves to ensure maximal viral gene expression and to evade host immune response. Also mediates cleavage of host YTHDF3. Mediates cleavage of host CARD8, thereby activating the CARD8 inflammasome, leading to the clearance of latent HIV-1 in patient CD4(+) T-cells after viral reactivation; in contrast, HIV-1 can evade CARD8-sensing when its protease remains inactive in infected cells prior to viral budding. In terms of biological role, multifunctional enzyme that converts the viral RNA genome into dsDNA in the cytoplasm, shortly after virus entry into the cell. This enzyme displays a DNA polymerase activity that can copy either DNA or RNA templates, and a ribonuclease H (RNase H) activity that cleaves the RNA strand of RNA-DNA heteroduplexes in a partially processive 3' to 5' endonucleasic mode. Conversion of viral genomic RNA into dsDNA requires many steps. A tRNA(3)-Lys binds to the primer-binding site (PBS) situated at the 5'-end of the viral RNA. RT uses the 3' end of the tRNA primer to perform a short round of RNA-dependent minus-strand DNA synthesis. The reading proceeds through the U5 region and ends after the repeated (R) region which is present at both ends of viral RNA. The portion of the RNA-DNA heteroduplex is digested by the RNase H, resulting in a ssDNA product attached to the tRNA primer. This ssDNA/tRNA hybridizes with the identical R region situated at the 3' end of viral RNA. This template exchange, known as minus-strand DNA strong stop transfer, can be either intra- or intermolecular. RT uses the 3' end of this newly synthesized short ssDNA to perform the RNA-dependent minus-strand DNA synthesis of the whole template. RNase H digests the RNA template except for two polypurine tracts (PPTs) situated at the 5'-end and near the center of the genome. It is not clear if both polymerase and RNase H activities are simultaneous. RNase H probably can proceed both in a polymerase-dependent (RNA cut into small fragments by the same RT performing DNA synthesis) and a polymerase-independent mode (cleavage of remaining RNA fragments by free RTs). Secondly, RT performs DNA-directed plus-strand DNA synthesis using the PPTs that have not been removed by RNase H as primers. PPTs and tRNA primers are then removed by RNase H. The 3' and 5' ssDNA PBS regions hybridize to form a circular dsDNA intermediate. Strand displacement synthesis by RT to the PBS and PPT ends produces a blunt ended, linear dsDNA copy of the viral genome that includes long terminal repeats (LTRs) at both ends. Functionally, catalyzes viral DNA integration into the host chromosome, by performing a series of DNA cutting and joining reactions. This enzyme activity takes place after virion entry into a cell and reverse transcription of the RNA genome in dsDNA. The first step in the integration process is 3' processing. This step requires a complex comprising the viral genome, matrix protein, Vpr and integrase. This complex is called the pre-integration complex (PIC). The integrase protein removes 2 nucleotides from each 3' end of the viral DNA, leaving recessed CA OH's at the 3' ends. In the second step, the PIC enters cell nucleus. This process is mediated through integrase and Vpr proteins, and allows the virus to infect a non dividing cell. This ability to enter the nucleus is specific of lentiviruses, other retroviruses cannot and rely on cell division to access cell chromosomes. In the third step, termed strand transfer, the integrase protein joins the previously processed 3' ends to the 5' ends of strands of target cellular DNA at the site of integration. The 5'-ends are produced by integrase-catalyzed staggered cuts, 5 bp apart. A Y-shaped, gapped, recombination intermediate results, with the 5'-ends of the viral DNA strands and the 3' ends of target DNA strands remaining unjoined, flanking a gap of 5 bp. The last step is viral DNA integration into host chromosome. This involves host DNA repair synthesis in which the 5 bp gaps between the unjoined strands are filled in and then ligated. Since this process occurs at both cuts flanking the HIV genome, a 5 bp duplication of host DNA is produced at the ends of HIV-1 integration. Alternatively, Integrase may catalyze the excision of viral DNA just after strand transfer, this is termed disintegration. This is Gag-Pol polyprotein (gag-pol) from Human immunodeficiency virus type 1 group O (isolate ANT70) (HIV-1).